The sequence spans 246 residues: Alpha-tubulin N-acetyltransferase (246 aa).

Residues 21-202 (LTLVPDGVSR…NNFVVFHSFF (182 aa)) enclose the N-acetyltransferase domain. Acetyl-CoA is bound by residues 135–148 (FYVD…GYGK) and 172–181 (SNKLLGFLRK).

This sequence belongs to the acetyltransferase ATAT1 family.

The catalysed reaction is L-lysyl-[alpha-tubulin] + acetyl-CoA = N(6)-acetyl-L-lysyl-[alpha-tubulin] + CoA + H(+). Specifically acetylates 'Lys-40' in alpha-tubulin on the lumenal side of microtubules. Promotes microtubule destabilization and accelerates microtubule dynamics; this activity may be independent of acetylation activity. Acetylates alpha-tubulin with a slow enzymatic rate, due to a catalytic site that is not optimized for acetyl transfer. Enters the microtubule through each end and diffuses quickly throughout the lumen of microtubules. Acetylates only long/old microtubules because of its slow acetylation rate since it does not have time to act on dynamically unstable microtubules before the enzyme is released. In Leishmania major, this protein is Alpha-tubulin N-acetyltransferase.